The following is a 224-amino-acid chain: Holliday junction branch migration complex subunit RuvA (224 aa).

A domain I region spans residues 1-64 (MIGKVAGILD…EDLLQLFGFP (64 aa)). The interval 65 to 143 (TMIEKEWHRL…ALMAMGGGTA (79 aa)) is domain II. The tract at residues 141-185 (GTAALAPSEPPEPQPGTSSGSRRKTRAPEPPRPSHTADALSALAN) is disordered. Positions 144–170 (ALAPSEPPEPQPGTSSGSRRKTRAPEP) are flexible linker. The interval 171-224 (PRPSHTADALSALANLGYQPTDAAQAVAQAAGESPDADTAALIRAALKLLAPKS) is domain III.

The protein belongs to the RuvA family. Homotetramer. Forms an RuvA(8)-RuvB(12)-Holliday junction (HJ) complex. HJ DNA is sandwiched between 2 RuvA tetramers; dsDNA enters through RuvA and exits via RuvB. An RuvB hexamer assembles on each DNA strand where it exits the tetramer. Each RuvB hexamer is contacted by two RuvA subunits (via domain III) on 2 adjacent RuvB subunits; this complex drives branch migration. In the full resolvosome a probable DNA-RuvA(4)-RuvB(12)-RuvC(2) complex forms which resolves the HJ.

The protein resides in the cytoplasm. Its function is as follows. The RuvA-RuvB-RuvC complex processes Holliday junction (HJ) DNA during genetic recombination and DNA repair, while the RuvA-RuvB complex plays an important role in the rescue of blocked DNA replication forks via replication fork reversal (RFR). RuvA specifically binds to HJ cruciform DNA, conferring on it an open structure. The RuvB hexamer acts as an ATP-dependent pump, pulling dsDNA into and through the RuvAB complex. HJ branch migration allows RuvC to scan DNA until it finds its consensus sequence, where it cleaves and resolves the cruciform DNA. This chain is Holliday junction branch migration complex subunit RuvA, found in Cereibacter sphaeroides (strain KD131 / KCTC 12085) (Rhodobacter sphaeroides).